The primary structure comprises 48 residues: Phospholipase A2 TI-Nh (48 aa).

His-25 is a catalytic residue. Residue Asp-26 participates in Ca(2+) binding.

The protein belongs to the phospholipase A2 family. Group I subfamily. D49 sub-subfamily. As to quaternary structure, monomer. Requires Ca(2+) as cofactor. As to expression, expressed by the venom gland.

Its subcellular location is the secreted. It catalyses the reaction a 1,2-diacyl-sn-glycero-3-phosphocholine + H2O = a 1-acyl-sn-glycero-3-phosphocholine + a fatty acid + H(+). Phospholipase A2 with weak enzymatic activity, which partially inhibits thrombin enzymatic activity (Ki=73 nM), completely inhibits thrombin-induced platelet aggregation and retards fibrin clot formation (IC(50)=0.2 nM). May exert this anticoagulant effect through a non-enzymatic mechanism. In Naja haje haje (Egyptian cobra), this protein is Phospholipase A2 TI-Nh.